Consider the following 459-residue polypeptide: MLKIYNSITRQKQEFKPITPGKIGMYVCGVTIYDLCHIGHGRTFVSFDMIVRYLRYAGYEVNFQRNITDVDDKIIKRANENNESCEALTERLIGEMHQDFDALNMLRPDFEPRATLHIAEIIDMVELLLARGHAYVASDGDVLFSVASYPDYGRLSGQNLDQLQAGARVEVDETKQNPMDFVLWKMSKPGEPTWESPWGPGRPGWHIECSAMNSKHLGLHFDIHGGGSDLQFPHHENEIAQSCCAHDTPYVNYWMHTGMVMVDREKMSKSLGNFFTIRDVLGHYDAETVRYFLLSGHYRSQLNYSEDNLKQARSALERLYTAIKDVDLTVAAAPAEEFVAKFKAAMDDDFNTPEAYSVLFDMVREINRLKLTDMAQASALAVTLKQLADVLGLLSQEPEAFFQGGGSDDEVAEIEALIVERNRARTEKDWAAADVARNRLNELGVELEDGPSGTTWRKK.

A Zn(2+)-binding site is contributed by cysteine 28. Residues 30 to 40 (VTIYDLCHIGH) carry the 'HIGH' region motif. Residues cysteine 209, histidine 234, and glutamate 238 each contribute to the Zn(2+) site. The 'KMSKS' region signature appears at 266–270 (KMSKS). Lysine 269 provides a ligand contact to ATP.

The protein belongs to the class-I aminoacyl-tRNA synthetase family. As to quaternary structure, monomer. Requires Zn(2+) as cofactor.

The protein resides in the cytoplasm. It carries out the reaction tRNA(Cys) + L-cysteine + ATP = L-cysteinyl-tRNA(Cys) + AMP + diphosphate. This is Cysteine--tRNA ligase from Shewanella baltica (strain OS185).